We begin with the raw amino-acid sequence, 97 residues long: Aspartyl/glutamyl-tRNA(Asn/Gln) amidotransferase subunit C (97 aa).

Residues 59-78 are disordered; it reads STGKLRPDEPAQPLSRDDAL. The segment covering 63–78 has biased composition (basic and acidic residues); that stretch reads LRPDEPAQPLSRDDAL.

This sequence belongs to the GatC family. Heterotrimer of A, B and C subunits.

It carries out the reaction L-glutamyl-tRNA(Gln) + L-glutamine + ATP + H2O = L-glutaminyl-tRNA(Gln) + L-glutamate + ADP + phosphate + H(+). The enzyme catalyses L-aspartyl-tRNA(Asn) + L-glutamine + ATP + H2O = L-asparaginyl-tRNA(Asn) + L-glutamate + ADP + phosphate + 2 H(+). Allows the formation of correctly charged Asn-tRNA(Asn) or Gln-tRNA(Gln) through the transamidation of misacylated Asp-tRNA(Asn) or Glu-tRNA(Gln) in organisms which lack either or both of asparaginyl-tRNA or glutaminyl-tRNA synthetases. The reaction takes place in the presence of glutamine and ATP through an activated phospho-Asp-tRNA(Asn) or phospho-Glu-tRNA(Gln). This Metallosphaera sedula (strain ATCC 51363 / DSM 5348 / JCM 9185 / NBRC 15509 / TH2) protein is Aspartyl/glutamyl-tRNA(Asn/Gln) amidotransferase subunit C.